We begin with the raw amino-acid sequence, 390 residues long: Heparan sulfate glucosamine 3-O-sulfotransferase 3B1 (390 aa).

The segment at 1–25 (MGQRLSGGRSCLDVPGRFLPQPPPP) is disordered. The Cytoplasmic portion of the chain corresponds to 1-32 (MGQRLSGGRSCLDVPGRFLPQPPPPPPPVRRK). A helical; Signal-anchor for type II membrane protein transmembrane segment spans residues 33–53 (LALLFAMLCIWLYMFLYSCAG). Over 54-390 (SCTAAPGLLL…QMTGRDFGWD (337 aa)) the chain is Lumenal. The disordered stretch occupies residues 79–125 (TAPNETSPKMPFRAPPANSLAAGKDKTVGAGSQEEQSPEAPDSPSPI). An N-linked (GlcNAc...) asparagine glycan is attached at Asn82. A 3'-phosphoadenylyl sulfate-binding site is contributed by 147–151 (KGGTR). Residues 169–175 (EPHFFDR) and 200–203 (KTPS) contribute to the substrate site. Arg228 and Ser236 together coordinate 3'-phosphoadenylyl sulfate. A glycan (N-linked (GlcNAc...) asparagine) is linked at Asn258. 268 to 269 (WS) is a substrate binding site. Asn329 is a glycosylation site (N-linked (GlcNAc...) asparagine). Cys336 and Cys348 form a disulfide bridge. 353-357 (KGRAH) lines the 3'-phosphoadenylyl sulfate pocket.

This sequence belongs to the sulfotransferase 1 family.

The protein localises to the golgi apparatus membrane. It catalyses the reaction alpha-D-glucosaminyl-[heparan sulfate](n) + 3'-phosphoadenylyl sulfate = 3-sulfo-alpha-D-glucosaminyl-[heparan sulfate](n) + adenosine 3',5'-bisphosphate + H(+). Functionally, sulfotransferase that utilizes 3'-phospho-5'-adenylyl sulfate (PAPS) to catalyze the transfer of a sulfo group to an N-unsubstituted glucosamine linked to a 2-O-sulfo iduronic acid unit on heparan sulfate. Catalyzes the O-sulfation of glucosamine in IdoUA2S-GlcNS and also in IdoUA2S-GlcNH2. Unlike HS3ST1/3-OST-1, does not convert non-anticoagulant heparan sulfate to anticoagulant heparan sulfate. The chain is Heparan sulfate glucosamine 3-O-sulfotransferase 3B1 (Hs3st3b1) from Mus musculus (Mouse).